The primary structure comprises 444 residues: Trigger factor (444 aa).

Residues 163 to 248 (GDFLTVDFVG…AKALKKAVAP (86 aa)) form the PPIase FKBP-type domain.

Belongs to the FKBP-type PPIase family. Tig subfamily.

Its subcellular location is the cytoplasm. It carries out the reaction [protein]-peptidylproline (omega=180) = [protein]-peptidylproline (omega=0). Functionally, involved in protein export. Acts as a chaperone by maintaining the newly synthesized protein in an open conformation. Functions as a peptidyl-prolyl cis-trans isomerase. This Granulibacter bethesdensis (strain ATCC BAA-1260 / CGDNIH1) protein is Trigger factor.